Here is a 415-residue protein sequence, read N- to C-terminus: Vascular endothelial growth factor C (415 aa).

The signal sequence occupies residues 1 to 31 (MHLLCFLSLACSLLAAALIPSPREAPATVAA). Residues 32-107 (FESGLGFSEA…RTGDSVKFAA (76 aa)) constitute a propeptide that is removed on maturation. Intrachain disulfides connect cysteine 127–cysteine 169, cysteine 158–cysteine 205, and cysteine 162–cysteine 207. N-linked (GlcNAc...) asparagine glycosylation is found at asparagine 171, asparagine 201, and asparagine 236. Residues 224–415 (SLPATLPQCQ…PSYWKRPHLN (192 aa)) constitute a propeptide that is removed on maturation. Repeat copies occupy residues 276 to 291 (CGPN…QCVC), 300 to 315 (CGPH…QCVC), 324 to 339 (CGAN…QCVC), and 343 to 358 (CPRN…ACEC). The segment at 276–358 (CGPNKELDED…LNPGKCACEC (83 aa)) is 4 X 16 AA repeats of C-X(10)-C-X-C-X(1,3)-C.

This sequence belongs to the PDGF/VEGF growth factor family. As to quaternary structure, homodimer; non-covalent and antiparallel. Interacts with FLT4/VEGFR3; the interaction is required for FLT4/VEGFR3 homodimarization and activation. Post-translationally, undergoes a complex proteolytic maturation which generates a variety of processed secreted forms with increased activity toward VEGFR-3, but only the fully processed form could activate VEGFR-2. VEGF-C first form an antiparallel homodimer linked by disulfide bonds. Before secretion, a cleavage occurs between Arg-223 and Ser-224 producing a heterotetramer. The next extracellular step of the processing removes the N-terminal propeptide. Finally the mature VEGF-C is composed mostly of two VEGF homology domains (VHDs) bound by non-covalent interactions. As to expression, expressed in adult heart, brain, spleen, lung, liver, skeletal muscle, kidney, testis and intestine with higher levels in heart, brain and kidney. Isoform 4 levels are very low. Isoform 3 is mostly expressed in liver and has reduced expression level in other tissues. Isoform 2 is mostly expressed in brain and kidney, although a lower level expression in other tissues is also detectable.

It is found in the secreted. In terms of biological role, growth factor active in angiogenesis, and endothelial cell growth, stimulating their proliferation and migration and also has effects on the permeability of blood vessels. May function in angiogenesis of the venous and lymphatic vascular systems during embryogenesis, and also in the maintenance of differentiated lymphatic endothelium in adults. Binds and activates KDR/VEGFR2 and FLT4/VEGFR3 receptors. The sequence is that of Vascular endothelial growth factor C (Vegfc) from Mus musculus (Mouse).